The primary structure comprises 467 residues: Transcription factor bHLH3 (467 aa).

A bHLH domain is found at E316–M365.

As to quaternary structure, homodimer.

It is found in the nucleus. The polypeptide is Transcription factor bHLH3 (BHLH3) (Arabidopsis thaliana (Mouse-ear cress)).